A 239-amino-acid chain; its full sequence is Methylthioribulose-1-phosphate dehydratase (239 aa).

Cys94 provides a ligand contact to substrate. The Zn(2+) site is built by His112 and His114. Glu136 serves as the catalytic Proton donor/acceptor. His192 is a Zn(2+) binding site.

Belongs to the aldolase class II family. MtnB subfamily. Requires Zn(2+) as cofactor.

The protein localises to the cytoplasm. The enzyme catalyses 5-(methylsulfanyl)-D-ribulose 1-phosphate = 5-methylsulfanyl-2,3-dioxopentyl phosphate + H2O. The protein operates within amino-acid biosynthesis; L-methionine biosynthesis via salvage pathway; L-methionine from S-methyl-5-thio-alpha-D-ribose 1-phosphate: step 2/6. Functionally, catalyzes the dehydration of methylthioribulose-1-phosphate (MTRu-1-P) into 2,3-diketo-5-methylthiopentyl-1-phosphate (DK-MTP-1-P). Functions in the methionine salvage pathway. May play a role in apoptosis. This is Methylthioribulose-1-phosphate dehydratase from Xenopus laevis (African clawed frog).